Here is a 462-residue protein sequence, read N- to C-terminus: ATP synthase subunit beta 2 (462 aa).

151-158 (GGAGVGKT) is an ATP binding site.

The protein belongs to the ATPase alpha/beta chains family. As to quaternary structure, F-type ATPases have 2 components, CF(1) - the catalytic core - and CF(0) - the membrane proton channel. CF(1) has five subunits: alpha(3), beta(3), gamma(1), delta(1), epsilon(1). CF(0) has three main subunits: a(1), b(2) and c(9-12). The alpha and beta chains form an alternating ring which encloses part of the gamma chain. CF(1) is attached to CF(0) by a central stalk formed by the gamma and epsilon chains, while a peripheral stalk is formed by the delta and b chains.

The protein localises to the cell inner membrane. The catalysed reaction is ATP + H2O + 4 H(+)(in) = ADP + phosphate + 5 H(+)(out). Produces ATP from ADP in the presence of a proton gradient across the membrane. The catalytic sites are hosted primarily by the beta subunits. This Chlorobaculum tepidum (strain ATCC 49652 / DSM 12025 / NBRC 103806 / TLS) (Chlorobium tepidum) protein is ATP synthase subunit beta 2.